Here is a 91-residue protein sequence, read N- to C-terminus: Histone H1, sperm (91 aa).

The interval 1–25 (PGSPQKRAASPRKSPRKGSPKKSPM) is disordered. Residues 9–20 (ASPRKSPRKGSP) are compositionally biased toward basic residues. One can recognise an H15 domain in the interval 18 to 91 (GSPKKSPMIR…TGATGRFRVG (74 aa)).

This sequence belongs to the histone H1/H5 family.

Its subcellular location is the nucleus. It is found in the chromosome. Functionally, histones H1 are necessary for the condensation of nucleosome chains into higher-order structures. In Sphaerechinus granularis (Purple sea urchin), this protein is Histone H1, sperm.